A 302-amino-acid chain; its full sequence is uncharacterized protein (302 aa).

Disordered stretches follow at residues 81-100 (ETSD…ERAA), 155-209 (TVTG…PVNP), and 269-302 (LRIE…ALLN). Residues 196-209 (PSLPSSLVSSPVNP) show a composition bias toward low complexity.

This is an uncharacterized protein from Ictalurid herpesvirus 1 (strain Auburn) (IcHV-1).